The primary structure comprises 222 residues: Uridine diphosphate glucose pyrophosphatase NUDT14 (222 aa).

The region spanning 38-206 (KTHDSVTVLL…DIPKTLGVIF (169 aa)) is the Nudix hydrolase domain. The short motif at 111 to 129 (PGLSLEEVACKEAWEECGY) is the Nudix box element.

Belongs to the Nudix hydrolase family. Homodimer. Mg(2+) is required as a cofactor.

It is found in the cytoplasm. It carries out the reaction UDP-sugar + H2O = UMP + alpha-D-aldose 1-phosphate.. Its function is as follows. Hydrolyzes UDP-glucose to glucose 1-phosphate and UMP and ADP-ribose to ribose 5-phosphate and AMP. The physiological substrate is probably UDP-glucose. Poor activity on other substrates such as ADP-glucose, CDP-glucose, GDP-glucose and GDP-mannose. The protein is Uridine diphosphate glucose pyrophosphatase NUDT14 (NUDT14) of Homo sapiens (Human).